We begin with the raw amino-acid sequence, 220 residues long: Iron-sulfur cluster repair protein YtfE (220 aa).

The protein belongs to the RIC family. YtfE subfamily. In terms of assembly, homodimer.

Its subcellular location is the cytoplasm. Its function is as follows. Di-iron-containing protein involved in the repair of iron-sulfur clusters damaged by oxidative and nitrosative stress conditions. The polypeptide is Iron-sulfur cluster repair protein YtfE (Citrobacter koseri (strain ATCC BAA-895 / CDC 4225-83 / SGSC4696)).